We begin with the raw amino-acid sequence, 337 residues long: Vegetative-specific protein H5 (337 aa).

The Involved in the stabilization of the negatively charged intermediate by the formation of the oxyanion hole motif lies at 88 to 90 (HGG). Residues S161, D261, and H291 contribute to the active site.

This sequence belongs to the 'GDXG' lipolytic enzyme family.

The sequence is that of Vegetative-specific protein H5 (cinB) from Dictyostelium discoideum (Social amoeba).